A 100-amino-acid polypeptide reads, in one-letter code: Integration host factor subunit alpha (100 aa).

Belongs to the bacterial histone-like protein family. Heterodimer of an alpha and a beta chain.

In terms of biological role, this protein is one of the two subunits of integration host factor, a specific DNA-binding protein that functions in genetic recombination as well as in transcriptional and translational control. The polypeptide is Integration host factor subunit alpha (Buchnera aphidicola subsp. Schizaphis graminum (strain Sg)).